The primary structure comprises 430 residues: Histidine--tRNA ligase (430 aa).

This sequence belongs to the class-II aminoacyl-tRNA synthetase family. Homodimer.

It is found in the cytoplasm. It carries out the reaction tRNA(His) + L-histidine + ATP = L-histidyl-tRNA(His) + AMP + diphosphate + H(+). This is Histidine--tRNA ligase from Acinetobacter baylyi (strain ATCC 33305 / BD413 / ADP1).